The following is an 822-amino-acid chain: Nucleolar complex protein 3 (822 aa).

Disordered stretches follow at residues 1-86, 106-142, and 172-199; these read MGTK…DGDD, ANKRKRKAKTTGENDPDQGQSIGLERAYASDTKKEQD, and KPKQKKKNEEEEEDDSEEDGDTEYEDSD. Residues 13–23 are compositionally biased toward basic residues; the sequence is RAAHLKSKKTP. Over residues 35 to 45 the composition is skewed to basic and acidic residues; sequence KRDQLKSKREQ. The short motif at 41–48 is the Nuclear localization signal element; the sequence is SKREQGQN. Acidic residues predominate over residues 76-86; the sequence is PLEEDNEDGDD. Residues 116-126 are compositionally biased toward polar residues; it reads TGENDPDQGQS. Residues 181–199 show a composition bias toward acidic residues; that stretch reads EEEEDDSEEDGDTEYEDSD. Position 187 is a phosphoserine (serine 187). Position 193 is a phosphothreonine (threonine 193). Serine 198 carries the phosphoserine modification. Residues 445 to 509 adopt a coiled-coil conformation; the sequence is KIKNVNLDAE…NKQAKHQKLT (65 aa).

The protein belongs to the CBF/MAK21 family.

The protein resides in the nucleus. It localises to the nucleolus. The sequence is that of Nucleolar complex protein 3 from Drosophila melanogaster (Fruit fly).